We begin with the raw amino-acid sequence, 463 residues long: Succinate--CoA ligase [ADP-forming] subunit beta, mitochondrial (463 aa).

The N-terminal 52 residues, 1-52, are a transit peptide targeting the mitochondrion; the sequence is MAASMFYGRLVAVATLRNHRPRTAQRAAAQVLGSSGLFNNHGLQVQQQQQRN. Residues 61–288 enclose the ATP-grasp domain; that stretch reads MELLQEAGVS…SNSAYRQKKI (228 aa). At lysine 78 the chain carries N6-acetyllysine. Tyrosine 84 is modified (phosphotyrosine). An N6-acetyllysine; alternate modification is found at lysine 88. Residue lysine 88 is modified to N6-succinyllysine; alternate. Residues lysine 98 and 105-107 each bind ATP; that span reads GRG. Lysine 129, lysine 139, lysine 143, and lysine 216 each carry N6-acetyllysine. Residues asparagine 258 and aspartate 272 each contribute to the Mg(2+) site. Serine 279 is subject to Phosphoserine. Residue asparagine 323 coordinates substrate. Phosphothreonine is present on threonine 341. Lysine 368 carries the N6-acetyllysine modification. 380–382 is a binding site for substrate; sequence GIM.

This sequence belongs to the succinate/malate CoA ligase beta subunit family. ATP-specific subunit beta subfamily. As to quaternary structure, heterodimer of an alpha and a beta subunit. The beta subunit determines specificity for ATP. Interacts with ALAS2. Requires Mg(2+) as cofactor. In terms of tissue distribution, widely expressed. Not expressed in liver and lung.

It localises to the mitochondrion. It carries out the reaction succinate + ATP + CoA = succinyl-CoA + ADP + phosphate. The protein operates within carbohydrate metabolism; tricarboxylic acid cycle; succinate from succinyl-CoA (ligase route): step 1/1. Its activity is regulated as follows. Inhibited by itaconate. ATP-specific succinyl-CoA synthetase functions in the citric acid cycle (TCA), coupling the hydrolysis of succinyl-CoA to the synthesis of ATP and thus represents the only step of substrate-level phosphorylation in the TCA. The beta subunit provides nucleotide specificity of the enzyme and binds the substrate succinate, while the binding sites for coenzyme A and phosphate are found in the alpha subunit. This chain is Succinate--CoA ligase [ADP-forming] subunit beta, mitochondrial, found in Homo sapiens (Human).